The following is a 146-amino-acid chain: Hemoglobin subunit beta-2 (146 aa).

Positions 2-146 constitute a Globin domain; that stretch reads KWTDKERAVI…VVSALGKQYC (145 aa). Residues H63 and H92 each coordinate heme b.

This sequence belongs to the globin family. Heterotetramer of two alpha chains and two beta chains. As to expression, red blood cells.

Its function is as follows. Involved in oxygen transport from gills to the various peripheral tissues. This chain is Hemoglobin subunit beta-2 (hbb2), found in Lycodes reticulatus (Arctic eelpout).